A 262-amino-acid chain; its full sequence is Indole-3-glycerol phosphate synthase (262 aa).

The protein belongs to the TrpC family.

The catalysed reaction is 1-(2-carboxyphenylamino)-1-deoxy-D-ribulose 5-phosphate + H(+) = (1S,2R)-1-C-(indol-3-yl)glycerol 3-phosphate + CO2 + H2O. The protein operates within amino-acid biosynthesis; L-tryptophan biosynthesis; L-tryptophan from chorismate: step 4/5. The sequence is that of Indole-3-glycerol phosphate synthase from Bordetella bronchiseptica (strain ATCC BAA-588 / NCTC 13252 / RB50) (Alcaligenes bronchisepticus).